The primary structure comprises 319 residues: Probable cell division protein WhiA (319 aa).

Residues 277–310 constitute a DNA-binding region (H-T-H motif); the sequence is SLEELGKLAEPAMTKDAIAGRIRRLLCLADKRAK.

Belongs to the WhiA family.

Involved in cell division and chromosome segregation. The sequence is that of Probable cell division protein WhiA from Tropheryma whipplei (strain Twist) (Whipple's bacillus).